We begin with the raw amino-acid sequence, 160 residues long: Eosinophil cationic protein (160 aa).

The signal sequence occupies residues 1 to 27; the sequence is MVPKLFTSQICLLLLLGLMGVEGSLHA. The segment at 28–72 is required for nearly all of the bactericidal activities; partially involved in LPS-binding; it reads RPPQFTRAQWFAIQHISLNPPRCTIAMRVINNYRWRCKNQNTFLR. H42 acts as the Proton acceptor in catalysis. Disulfide bonds link C50–C110, C64–C123, C82–C138, and C89–C98. Position 60 is a 3'-nitrotyrosine (Y60). Position 65 to 69 (65 to 69) interacts with substrate; sequence KNQNT. 3 N-linked (GlcNAc...) asparagine glycosylation sites follow: N84, N92, and N119. H155 functions as the Proton donor in the catalytic mechanism.

The protein belongs to the pancreatic ribonuclease family. In terms of assembly, interacts with bacterial lipopolysaccharide (LPS) and lipoteichoic acid (LTA). In vitro interacts with phospholipid bilayers.

The protein resides in the secreted. Functionally, cytotoxin and helminthotoxin with low-efficiency ribonuclease activity. Possesses a wide variety of biological activities. Exhibits antibacterial activity. This chain is Eosinophil cationic protein (RNASE3), found in Gorilla gorilla gorilla (Western lowland gorilla).